We begin with the raw amino-acid sequence, 509 residues long: Autophagy-related protein 16 (509 aa).

WD repeat units lie at residues 223-262 (AHEGGCGSIVFEYNSGTLFTGGQDRAVKMWDTNSGTLIKS), 265-304 (GSLGNILDMAVTHDNKSVIAATSSNNLFVWDVSSGRVRHT), 307-347 (GHTD…CTNT), 349-388 (LFTSNCNAICLSIDGLTVFSGHMDGNLRLWDIQTGKLLSE), 391-430 (GHSSAVTSVSLSRNGNRILTSGRDNVHNVFDTRTLEICGT), 437-478 (RLAS…SILK), and 480-509 (QTSPILCCSWSGIGKPLASADKNGYVCTWT).

It belongs to the WD repeat ATG16 family.

Its function is as follows. May play a role in autophagy. The polypeptide is Autophagy-related protein 16 (Arabidopsis thaliana (Mouse-ear cress)).